The following is a 1092-amino-acid chain: Isoleucine--tRNA ligase (1092 aa).

Residues 53 to 63 carry the 'HIGH' region motif; the sequence is PFANGLPHYGH. The short motif at 613–617 is the 'KMSKS' region element; sequence KLSKR. ATP is bound at residue Lys616.

This sequence belongs to the class-I aminoacyl-tRNA synthetase family. IleS type 2 subfamily. In terms of assembly, monomer. The cofactor is Zn(2+).

It is found in the cytoplasm. The enzyme catalyses tRNA(Ile) + L-isoleucine + ATP = L-isoleucyl-tRNA(Ile) + AMP + diphosphate. In terms of biological role, catalyzes the attachment of isoleucine to tRNA(Ile). As IleRS can inadvertently accommodate and process structurally similar amino acids such as valine, to avoid such errors it has two additional distinct tRNA(Ile)-dependent editing activities. One activity is designated as 'pretransfer' editing and involves the hydrolysis of activated Val-AMP. The other activity is designated 'posttransfer' editing and involves deacylation of mischarged Val-tRNA(Ile). In Rickettsia conorii (strain ATCC VR-613 / Malish 7), this protein is Isoleucine--tRNA ligase.